A 211-amino-acid chain; its full sequence is Transcription factor ces-2 (211 aa).

A compositionally biased stretch (low complexity) spans 83 to 101 (VSSRSSTVSSSHFSSPQRS). 2 disordered regions span residues 83-152 (VSSR…HALE) and 184-211 (NSEVSCESNDSTETNDSNDSKSDSTIEV). Residues 111–152 (PEEKKDSAYFERRRKNNDAAKRSRDARRQKEEQIASKAHALE) show a composition bias toward basic and acidic residues. The 64-residue stretch at 116–179 (DSAYFERRRK…AQLRFLLFSK (64 aa)) folds into the bZIP domain. The tract at residues 122–140 (RRRKNNDAAKRSRDARRQK) is basic motif. The tract at residues 144-172 (IASKAHALERENMQLRGKVSSLEQEAAQL) is leucine-zipper. The segment covering 190-200 (ESNDSTETNDS) has biased composition (low complexity). The segment covering 201–211 (NDSKSDSTIEV) has biased composition (basic and acidic residues).

Belongs to the bZIP family. As to quaternary structure, interacts with NFIL3 transcription factor homolog atf-2.

The protein resides in the nucleus. Its function is as follows. Transcription factor. Required to activate programmed cell death in the sister cells of the serotoninergic neurosecretory motor (NSM) neurons. Negatively regulates the activity of ces-1 which in turn negatively regulates the activities of cell-killing genes. Binds to the DNA sequence 5'-RTTACGTAAY-3'. Involved in the development of the excretory duct cell, by positively modulating embryonic transcription of putative transcription factor lin-48, acting in concert with NFIL3 transcription factor homolog atf-2. Positively modulates expression of neuropeptide pigment dispersing factor homologs pdf-1 and pdf-2. This Caenorhabditis elegans protein is Transcription factor ces-2 (ces-2).